A 262-amino-acid chain; its full sequence is Phosphonates import ATP-binding protein PhnC (262 aa).

The 249-residue stretch at Ile-5–Asn-253 folds into the ABC transporter domain. Gly-37–Ser-44 contributes to the ATP binding site.

The protein belongs to the ABC transporter superfamily. Phosphonates importer (TC 3.A.1.9.1) family. The complex is composed of two ATP-binding proteins (PhnC), two transmembrane proteins (PhnE) and a solute-binding protein (PhnD).

Its subcellular location is the cell inner membrane. The catalysed reaction is phosphonate(out) + ATP + H2O = phosphonate(in) + ADP + phosphate + H(+). In terms of biological role, part of the ABC transporter complex PhnCDE involved in phosphonates import. Responsible for energy coupling to the transport system. The sequence is that of Phosphonates import ATP-binding protein PhnC from Shigella sonnei (strain Ss046).